A 358-amino-acid polypeptide reads, in one-letter code: Peptide chain release factor 1 (358 aa).

Residue Gln233 is modified to N5-methylglutamine.

It belongs to the prokaryotic/mitochondrial release factor family. In terms of processing, methylated by PrmC. Methylation increases the termination efficiency of RF1.

It is found in the cytoplasm. Peptide chain release factor 1 directs the termination of translation in response to the peptide chain termination codons UAG and UAA. The chain is Peptide chain release factor 1 from Staphylococcus epidermidis (strain ATCC 35984 / DSM 28319 / BCRC 17069 / CCUG 31568 / BM 3577 / RP62A).